Here is a 128-residue protein sequence, read N- to C-terminus: Fluoride-specific ion channel FluC (128 aa).

A run of 4 helical transmembrane segments spans residues 3–23 (LYAL…RWWF), 33–53 (TLPL…GAAI), 69–89 (FAIT…AETV), and 99–119 (WTFV…ILGI). Positions 76 and 79 each coordinate Na(+).

Belongs to the fluoride channel Fluc/FEX (TC 1.A.43) family.

Its subcellular location is the cell inner membrane. It carries out the reaction fluoride(in) = fluoride(out). With respect to regulation, na(+) is not transported, but it plays an essential structural role and its presence is essential for fluoride channel function. In terms of biological role, fluoride-specific ion channel. Important for reducing fluoride concentration in the cell, thus reducing its toxicity. This Nitrosospira multiformis (strain ATCC 25196 / NCIMB 11849 / C 71) protein is Fluoride-specific ion channel FluC.